A 739-amino-acid chain; its full sequence is Polyribonucleotide nucleotidyltransferase (739 aa).

Mg(2+) contacts are provided by aspartate 489 and aspartate 495. The 60-residue stretch at 556–615 (PKIDTIKIDVDKIKIVIGKGGETIDKIIAETGVKIDIDEDGLVAIFSPDRAAIERTKEII) folds into the KH domain. Residues 625 to 693 (DEVFQAKVVR…DKGRIDASMK (69 aa)) enclose the S1 motif domain. The tract at residues 699–739 (PEGYVEPEKRERSEKPRRHKEHKEKKDNNFGEFKFHKVDKK) is disordered. Basic and acidic residues predominate over residues 722 to 739 (EKKDNNFGEFKFHKVDKK).

Belongs to the polyribonucleotide nucleotidyltransferase family. The cofactor is Mg(2+).

It is found in the cytoplasm. It catalyses the reaction RNA(n+1) + phosphate = RNA(n) + a ribonucleoside 5'-diphosphate. Involved in mRNA degradation. Catalyzes the phosphorolysis of single-stranded polyribonucleotides processively in the 3'- to 5'-direction. The chain is Polyribonucleotide nucleotidyltransferase from Streptococcus suis (strain 98HAH33).